Consider the following 702-residue polypeptide: Ribosomal RNA large subunit methyltransferase K/L (702 aa).

One can recognise a THUMP domain in the interval 43 to 154 (LIYQSLMWSR…KETASIALDL (112 aa)).

The protein belongs to the methyltransferase superfamily. RlmKL family.

The protein localises to the cytoplasm. It carries out the reaction guanosine(2445) in 23S rRNA + S-adenosyl-L-methionine = N(2)-methylguanosine(2445) in 23S rRNA + S-adenosyl-L-homocysteine + H(+). The enzyme catalyses guanosine(2069) in 23S rRNA + S-adenosyl-L-methionine = N(2)-methylguanosine(2069) in 23S rRNA + S-adenosyl-L-homocysteine + H(+). Specifically methylates the guanine in position 2445 (m2G2445) and the guanine in position 2069 (m7G2069) of 23S rRNA. This chain is Ribosomal RNA large subunit methyltransferase K/L, found in Salmonella typhi.